We begin with the raw amino-acid sequence, 1209 residues long: Neural cell adhesion molecule L1-like protein (1209 aa).

Residues 1–25 (MMELPLCGRGLILSLIFLLLKLSAA) form the signal peptide. Topologically, residues 26–1083 (EIPLSVQQVP…LYDDISTQGW (1058 aa)) are extracellular. 2 Ig-like C2-type domains span residues 35-124 (PTIV…EEIE) and 128-223 (PGVP…MKLT). Disulfide bonds link cysteine 57/cysteine 109 and cysteine 153/cysteine 204. A glycan (N-linked (GlcNAc...) asparagine) is linked at asparagine 87. Residues asparagine 225 and asparagine 299 are each glycosylated (N-linked (GlcNAc...) asparagine). Ig-like C2-type domains are found at residues 235 to 328 (PKLL…VTVE), 331 to 417 (PRWK…ANID), 423 to 510 (PLIK…ANLD), and 515 to 607 (TKLR…TQVT). Intrachain disulfides connect cysteine 262–cysteine 310, cysteine 352–cysteine 401, cysteine 445–cysteine 494, and cysteine 536–cysteine 591. An N-linked (GlcNAc...) asparagine glycan is attached at asparagine 476. The DGEA signature appears at 555–558 (DGEA). N-linked (GlcNAc...) asparagine glycans are attached at residues asparagine 562 and asparagine 580. 4 consecutive Fibronectin type-III domains span residues 614-709 (PPGN…TPPA), 714-807 (NPQN…SGED), 812-914 (APVI…TPEG), and 918-1015 (QPSF…LGEG). The segment at 696-717 (HASLPSDHHETPPAAPDKNPQN) is disordered. 4 N-linked (GlcNAc...) asparagine glycosylation sites follow: asparagine 767, asparagine 822, asparagine 945, and asparagine 1027. A helical transmembrane segment spans residues 1084 to 1104 (FIGLMCAIALLTLILLTICFV). The Cytoplasmic segment spans residues 1105 to 1209 (KRNRGGKYSV…SSTATFPLRA (105 aa)). Over residues 1115 to 1133 (KEKEDLHPDPEVQSAKDET) the composition is skewed to basic and acidic residues. Positions 1115-1170 (KEKEDLHPDPEVQSAKDETFGEYSDSDEKPLKGSLRSLNRNMQPTESADSLVEYGE) are disordered. Residues serine 1148, serine 1161, and serine 1181 each carry the phosphoserine modification. The segment covering 1150 to 1162 (RSLNRNMQPTESA) has biased composition (polar residues). The FIG[AQ]Y motif lies at 1182-1186 (FIGAY).

It belongs to the immunoglobulin superfamily. L1/neurofascin/NgCAM family. In terms of assembly, may interact with L1CAM. May interact with ITGB1/ITGA1 heterodimer and ITGB1/ITGA2 heterodimer as well as with ANK3. In terms of processing, cleavage by metalloprotease ADAM8 in the extracellular part generates 2 soluble forms (125 kDa and 165 kDa) in vitro and is inhibited by metalloprotease inhibitors. In brain extracts, these two soluble forms are also present and are dramatically reduced in mice lacking ADAM8. Cleaved by BACE1. N-glycosylated. Contains N-linked oligosaccharides with a sulfated carbohydrate structure type HNK-1 (SO4-3-GlcUABeta1,3GalBeta1,4GlcNAc). Post-translationally, O-glycosylated. As to expression, expressed in the brain, in the cerebellum and in the spinal cord. Detected in the retina and the optic nerve. Expressed in neurons and glial cells in the central nervous system and by Schwann cells in the peripheral nervous system.

It localises to the cell membrane. The protein localises to the secreted. Its subcellular location is the extracellular space. It is found in the extracellular matrix. Extracellular matrix and cell adhesion protein that plays a role in nervous system development and in synaptic plasticity. Both soluble and membranous forms promote neurite outgrowth of cerebellar and hippocampal neurons and suppress neuronal cell death. Plays a role in neuronal positioning of pyramidal neurons as well as in regulation of both the number of interneurons and the efficacy of GABAergic synapses. May play a role in regulating cell migration in nerve regeneration and cortical development. Potentiates integrin-dependent cell migration towards extracellular matrix proteins. Recruits ANK3 to the plasma membrane. This is Neural cell adhesion molecule L1-like protein (Chl1) from Mus musculus (Mouse).